We begin with the raw amino-acid sequence, 213 residues long: MSYAYLFKYIIIGDTGVGKSCLLLQFTDKRFQPVHDLTIGVEFGARMITIDGKQIKLQIWDTAGQEAFRSITRSYYRGAAGALLVYDITRRETFNHLTTWLEDARQHSNSNMVIMLIGNKSDLDSRREVKKEEGEAFAREHGLVFMETSARTAANVEEAFINTAKEIYEKIQEGVFDINNEANGIKIGQQHSPTNPSLPGAGGAAGAANSGCC.

T15, G16, G18, K19, S20, C21, Q32, P33, H35, T38, G64, N119, D122, and A150 together coordinate GTP. Position 20 (S20) interacts with Mg(2+). Residue T38 coordinates Mg(2+). The segment at 190–213 (QHSPTNPSLPGAGGAAGAANSGCC) is disordered. Residues C212 and C213 are each lipidated (S-geranylgeranyl cysteine).

The protein belongs to the small GTPase superfamily. Rab family. As to quaternary structure, interacts (GTP-bound form) with Vps16A and Vps39; the interaction with Vps39 is probably direct.

Its subcellular location is the vesicle. The protein resides in the cytoplasmic vesicle. It is found in the cell projection. The protein localises to the axon. It localises to the presynapse. Its subcellular location is the presynaptic active zone. The protein resides in the golgi apparatus. It is found in the trans-Golgi network. The protein localises to the perikaryon. It localises to the autophagosome membrane. Its subcellular location is the autolysosome membrane. It catalyses the reaction GTP + H2O = GDP + phosphate + H(+). In terms of biological role, may be involved in bidirectional endoplasmic reticulum (ER) to Golgi trafficking. Together with Rab7 involved in promoting fusion of autophagosomes and endosomes with lysosomes, probably through recruitment of the HOPS tethering complex. Involved in biosynthetic transport to lysosomes. In larval motor neurons, mediates the biogenesis of presynaptic cargo vesicles and their long-range axonal trafficking to synaptic termini. Not involved in axonal trafficking of mitochondria. During vesicle biogenesis, active zone proteins (including brp/Bruchpilot) and synaptic vesicle proteins (including VGlut) are sorted from the trans-Golgi in a Rab2-dependent manner via, at least, two independent routes. Acts upstream of Arl8 during presynaptic precursor vesicle biogenesis. Associated with lysosomal marker positive presynaptic cargo vesicles during anterograde and retrograde axonal trafficking, probably while in its GTP-bound active state. Involved in the delivery of presynaptic cargos, but not presynapse assembly or active zone function at synaptic termini. Required for autophagocytosis-dependent remodeling of myofibrils and transverse-tubules (T-tubules) during metamorphosis. In Drosophila melanogaster (Fruit fly), this protein is Ras-related protein Rab-2.